The primary structure comprises 286 residues: 33 kDa chaperonin (286 aa).

2 disulfide bridges follow: C225-C227 and C258-C261.

The protein belongs to the HSP33 family. Post-translationally, under oxidizing conditions two disulfide bonds are formed involving the reactive cysteines. Under reducing conditions zinc is bound to the reactive cysteines and the protein is inactive.

Its subcellular location is the cytoplasm. In terms of biological role, redox regulated molecular chaperone. Protects both thermally unfolding and oxidatively damaged proteins from irreversible aggregation. Plays an important role in the bacterial defense system toward oxidative stress. The sequence is that of 33 kDa chaperonin from Shewanella woodyi (strain ATCC 51908 / MS32).